Reading from the N-terminus, the 283-residue chain is Bifunctional protein FolD (283 aa).

NADP(+) is bound by residues 164-166 (GRS) and Ser189.

It belongs to the tetrahydrofolate dehydrogenase/cyclohydrolase family. In terms of assembly, homodimer.

It carries out the reaction (6R)-5,10-methylene-5,6,7,8-tetrahydrofolate + NADP(+) = (6R)-5,10-methenyltetrahydrofolate + NADPH. The enzyme catalyses (6R)-5,10-methenyltetrahydrofolate + H2O = (6R)-10-formyltetrahydrofolate + H(+). It participates in one-carbon metabolism; tetrahydrofolate interconversion. Its function is as follows. Catalyzes the oxidation of 5,10-methylenetetrahydrofolate to 5,10-methenyltetrahydrofolate and then the hydrolysis of 5,10-methenyltetrahydrofolate to 10-formyltetrahydrofolate. This Lactobacillus acidophilus (strain ATCC 700396 / NCK56 / N2 / NCFM) protein is Bifunctional protein FolD.